Reading from the N-terminus, the 261-residue chain is Cytochrome c oxidase subunit 3 (261 aa).

Residues 1–15 are Mitochondrial matrix-facing; sequence MTHQTHAYHMVNPSP. The helical transmembrane segment at 16–34 threads the bilayer; the sequence is WPLTGALSALLMTSGLAMW. At 35–40 the chain is on the mitochondrial intermembrane side; the sequence is FHYNSM. The chain crosses the membrane as a helical span at residues 41-66; that stretch reads LLLTLGLMTNLLTMYQWWRDIVREST. Topologically, residues 67–72 are mitochondrial matrix; sequence FQGHHT. Residues 73–105 traverse the membrane as a helical segment; the sequence is LVVQKGLRYGMILFIISEVFFFSGFFWAFYHSS. At 106-128 the chain is on the mitochondrial intermembrane side; the sequence is LAPTPELGGCWPPTGIHPLNPME. Residues 129 to 152 form a helical membrane-spanning segment; sequence VPLLNTSVLLASGVSITWAHHSLM. The Mitochondrial matrix portion of the chain corresponds to 153–155; sequence EGN. A helical membrane pass occupies residues 156-183; that stretch reads RKHMLQALFITISLGVYFTLLQASEYYE. The Mitochondrial intermembrane segment spans residues 184–190; it reads APFTISD. Residues 191–223 traverse the membrane as a helical segment; that stretch reads GIYGSTFFVATGFHGLHVIIGSTFLIVCFLRQL. Topologically, residues 224–232 are mitochondrial matrix; the sequence is KFHFTSNHH. The helical transmembrane segment at 233–256 threads the bilayer; the sequence is FGFEAAAWYWHFVDVVWLFLYVSI. At 257 to 261 the chain is on the mitochondrial intermembrane side; sequence YWWGS.

It belongs to the cytochrome c oxidase subunit 3 family. As to quaternary structure, component of the cytochrome c oxidase (complex IV, CIV), a multisubunit enzyme composed of 14 subunits. The complex is composed of a catalytic core of 3 subunits MT-CO1, MT-CO2 and MT-CO3, encoded in the mitochondrial DNA, and 11 supernumerary subunits COX4I, COX5A, COX5B, COX6A, COX6B, COX6C, COX7A, COX7B, COX7C, COX8 and NDUFA4, which are encoded in the nuclear genome. The complex exists as a monomer or a dimer and forms supercomplexes (SCs) in the inner mitochondrial membrane with NADH-ubiquinone oxidoreductase (complex I, CI) and ubiquinol-cytochrome c oxidoreductase (cytochrome b-c1 complex, complex III, CIII), resulting in different assemblies (supercomplex SCI(1)III(2)IV(1) and megacomplex MCI(2)III(2)IV(2)).

It is found in the mitochondrion inner membrane. The enzyme catalyses 4 Fe(II)-[cytochrome c] + O2 + 8 H(+)(in) = 4 Fe(III)-[cytochrome c] + 2 H2O + 4 H(+)(out). Functionally, component of the cytochrome c oxidase, the last enzyme in the mitochondrial electron transport chain which drives oxidative phosphorylation. The respiratory chain contains 3 multisubunit complexes succinate dehydrogenase (complex II, CII), ubiquinol-cytochrome c oxidoreductase (cytochrome b-c1 complex, complex III, CIII) and cytochrome c oxidase (complex IV, CIV), that cooperate to transfer electrons derived from NADH and succinate to molecular oxygen, creating an electrochemical gradient over the inner membrane that drives transmembrane transport and the ATP synthase. Cytochrome c oxidase is the component of the respiratory chain that catalyzes the reduction of oxygen to water. Electrons originating from reduced cytochrome c in the intermembrane space (IMS) are transferred via the dinuclear copper A center (CU(A)) of subunit 2 and heme A of subunit 1 to the active site in subunit 1, a binuclear center (BNC) formed by heme A3 and copper B (CU(B)). The BNC reduces molecular oxygen to 2 water molecules using 4 electrons from cytochrome c in the IMS and 4 protons from the mitochondrial matrix. The sequence is that of Cytochrome c oxidase subunit 3 (MT-CO3) from Ceratotherium simum (White rhinoceros).